The sequence spans 53 residues: uncharacterized protein (53 aa).

The chain crosses the membrane as a helical span at residues 24-44 (LMTFIAVNAVLSLILIRAVIL).

It is found in the membrane. This is an uncharacterized protein from Methanocaldococcus jannaschii (strain ATCC 43067 / DSM 2661 / JAL-1 / JCM 10045 / NBRC 100440) (Methanococcus jannaschii).